The following is a 284-amino-acid chain: MTELIDGKALAQKMQQELAAKVNNLKQKKGIVPGLAVILVGDDPASQVYVRNKERAALTVGFKSETVRLSEFICQEELIAVIERYNADNTIHGILVQLPLPNHINDKKIILAIDPKKDVDGFHPMNTGHLWSGRPLMVPCTPSGIMELLREYNVNLEGKHAVIIGRSNIVGKPMAQLLLDKNATVTLTHSRTRQLEEVCRCADVLIVAIGQGHFITKQYIKDGAIVIDVGMNRDDNGKLIGDVAFDEVAEVAAKITPVPGGVGPMTIAMLLEQTYQSALRSTHK.

Residues 165 to 167 and Ser-190 each bind NADP(+); that span reads GRS.

The protein belongs to the tetrahydrofolate dehydrogenase/cyclohydrolase family. As to quaternary structure, homodimer.

It catalyses the reaction (6R)-5,10-methylene-5,6,7,8-tetrahydrofolate + NADP(+) = (6R)-5,10-methenyltetrahydrofolate + NADPH. The catalysed reaction is (6R)-5,10-methenyltetrahydrofolate + H2O = (6R)-10-formyltetrahydrofolate + H(+). The protein operates within one-carbon metabolism; tetrahydrofolate interconversion. Catalyzes the oxidation of 5,10-methylenetetrahydrofolate to 5,10-methenyltetrahydrofolate and then the hydrolysis of 5,10-methenyltetrahydrofolate to 10-formyltetrahydrofolate. This Streptococcus pyogenes serotype M28 (strain MGAS6180) protein is Bifunctional protein FolD.